The following is a 510-amino-acid chain: Maturase K (510 aa).

The protein belongs to the intron maturase 2 family. MatK subfamily.

It localises to the plastid. The protein resides in the chloroplast. In terms of biological role, usually encoded in the trnK tRNA gene intron. Probably assists in splicing its own and other chloroplast group II introns. In Thuja plicata (Western red-cedar), this protein is Maturase K.